The primary structure comprises 481 residues: MIKEWESVIGLEVHLQLKTGTKVWCGCKSDYDESGINLHTCPICLGHPGALPKLNKKVVDYAIKAALALNCQINNESGFDRKNYFYPDAPKNYQITQFEKSYAEKGYLEFKLNSGRQVKIGITKIQIEEDTAKAVHGKNESYLNFNRASIPLIEIISEPDMRNSEEAYEYLNTLKNIIKYTKISDVSMETGSLRCDANISVMEKGSKVFGTRVEVKNLNSFKAVARAIDYEIGRQIELIQNGGKVDQETRLWDEENQITRVMRSKEEAMDYRYFNEPDLLKLVISDEEIEEIKKDMPETRLAKIERFKNNYSLDEKDAFILTEEVELSDYFEEVVKYSNNAKLSSNWILTEVLRILKHKNIDIEKFTISSENLAKIIKLIDKNTISSKIAKEVFEIALDDSRDPEIIVKEKGLVQLSDTSEIEKMVDEVLANNQKMVDDYKSADEGRKPRVLKGIVGQVMKISKGKANPEIVNDLIMEKLK.

This sequence belongs to the GatB/GatE family. GatB subfamily. Heterotrimer of A, B and C subunits.

It catalyses the reaction L-glutamyl-tRNA(Gln) + L-glutamine + ATP + H2O = L-glutaminyl-tRNA(Gln) + L-glutamate + ADP + phosphate + H(+). The catalysed reaction is L-aspartyl-tRNA(Asn) + L-glutamine + ATP + H2O = L-asparaginyl-tRNA(Asn) + L-glutamate + ADP + phosphate + 2 H(+). In terms of biological role, allows the formation of correctly charged Asn-tRNA(Asn) or Gln-tRNA(Gln) through the transamidation of misacylated Asp-tRNA(Asn) or Glu-tRNA(Gln) in organisms which lack either or both of asparaginyl-tRNA or glutaminyl-tRNA synthetases. The reaction takes place in the presence of glutamine and ATP through an activated phospho-Asp-tRNA(Asn) or phospho-Glu-tRNA(Gln). This is Aspartyl/glutamyl-tRNA(Asn/Gln) amidotransferase subunit B from Fusobacterium nucleatum subsp. nucleatum (strain ATCC 25586 / DSM 15643 / BCRC 10681 / CIP 101130 / JCM 8532 / KCTC 2640 / LMG 13131 / VPI 4355).